We begin with the raw amino-acid sequence, 123 residues long: Integration host factor subunit alpha (123 aa).

The protein belongs to the bacterial histone-like protein family. As to quaternary structure, heterodimer of an alpha and a beta chain.

This protein is one of the two subunits of integration host factor, a specific DNA-binding protein that functions in genetic recombination as well as in transcriptional and translational control. The chain is Integration host factor subunit alpha from Polaromonas naphthalenivorans (strain CJ2).